Here is a 441-residue protein sequence, read N- to C-terminus: Damage-control phosphatase ARMT1 (441 aa).

The residue at position 2 (alanine 2) is an N-acetylalanine. Lysine 40 carries the post-translational modification N6-acetyllysine. Serine 102 is modified (phosphoserine). Residues aspartate 253 and asparagine 254 each coordinate Mn(2+). Aspartate 253 to asparagine 254 lines the substrate pocket. Positions 258 and 291 each coordinate S-adenosyl-L-methionine. A Mn(2+)-binding site is contributed by aspartate 291. Substrate-binding positions include aspartate 367 to arginine 371 and lysine 404. Positions arginine 401 to lysine 404 match the Subfamily III RTxK motif motif.

This sequence belongs to the damage-control phosphatase family. Sugar phosphate phosphatase III subfamily. It depends on Mn(2+) as a cofactor. Requires Ni(2+) as cofactor. In terms of processing, automethylated.

The catalysed reaction is beta-D-fructose 1-phosphate + H2O = D-fructose + phosphate. It carries out the reaction beta-D-fructose 6-phosphate = dihydroxyacetone + D-glyceraldehyde 3-phosphate. The enzyme catalyses L-glutamyl-[protein] + S-adenosyl-L-methionine = [protein]-L-glutamate 5-O-methyl ester + S-adenosyl-L-homocysteine. Functionally, metal-dependent phosphatase that shows phosphatase activity against several substrates, including fructose-1-phosphate and fructose-6-phosphate. Its preference for fructose-1-phosphate, a strong glycating agent that causes DNA damage rather than a canonical yeast metabolite, suggests a damage-control function in hexose phosphate metabolism. Has also been shown to have O-methyltransferase activity that methylates glutamate residues of target proteins to form gamma-glutamyl methyl ester residues. Possibly methylates PCNA, suggesting it is involved in the DNA damage response. This Bos taurus (Bovine) protein is Damage-control phosphatase ARMT1.